The following is a 423-amino-acid chain: Cyclin-dependent kinase 14 (423 aa).

The tract at residues 62 to 85 is disordered; sequence VGKESPKVRRHSSPSSPTSPKFGK. Residues 89–373 form the Protein kinase domain; it reads YEKLEKLGEG…AQAALNHDYF (285 aa). ATP is bound by residues 95 to 103 and K118; that span reads LGEGSYATV. The active-site Proton acceptor is the D210.

This sequence belongs to the protein kinase superfamily. CMGC Ser/Thr protein kinase family. CDC2/CDKX subfamily. In terms of assembly, interacts with ccny; ccny mediates its recruitment to the plasma membrane and promotes phosphorylation of lrp6.

It localises to the cell membrane. The catalysed reaction is L-seryl-[protein] + ATP = O-phospho-L-seryl-[protein] + ADP + H(+). It catalyses the reaction L-threonyl-[protein] + ATP = O-phospho-L-threonyl-[protein] + ADP + H(+). Functionally, serine/threonine-protein kinase involved in the control of the eukaryotic cell cycle, whose activity is controlled by an associated cyclin. Acts as a cell-cycle regulator of Wnt signaling pathway during G2/M phase by mediating the phosphorylation of lrp6, leading to the activation of the Wnt signaling pathway. This is Cyclin-dependent kinase 14 (cdk14) from Xenopus tropicalis (Western clawed frog).